The chain runs to 1090 residues: UPF0507 protein SCY_4172 (1090 aa).

Positions 289–436 constitute a VPS9 domain; it reads FSVNQLLTDF…FEDFNKNTGN (148 aa).

Belongs to the UPF0507 family.

The protein is UPF0507 protein SCY_4172 of Saccharomyces cerevisiae (strain YJM789) (Baker's yeast).